The following is a 542-amino-acid chain: Phenylacetone monooxygenase (542 aa).

FAD is bound by residues S27, E46, 54 to 57 (VWYW), D66, Y72, V119, and Q152. 64 to 66 (RCD) is a binding site for NADP(+). NADP(+)-binding positions include 194-200 (TGSSGIQ), 217-218 (RT), and 336-337 (KR). M446 provides a ligand contact to FAD. Residue W501 participates in NADP(+) binding.

It belongs to the FAD-binding monooxygenase family. As to quaternary structure, monomer. The cofactor is FAD.

The catalysed reaction is phenylacetone + NADPH + O2 + H(+) = benzyl acetate + NADP(+) + H2O. Functionally, catalyzes a Baeyer-Villiger oxidation reaction, i.e. the insertion of an oxygen atom into a carbon-carbon bond adjacent to a carbonyl, which converts ketones to esters. Is most efficient with phenylacetone as substrate, leading to the formation of benzyl acetate. Can also oxidize other aromatic ketones (benzylacetone, alpha-methylphenylacetone and 4-hydroxyacetophenone), some aliphatic ketones (dodecan-2-one and bicyclohept-2-en-6-one) and sulfides (e.g. methyl 4-tolylsulfide). The polypeptide is Phenylacetone monooxygenase (pamO) (Thermobifida fusca (strain YX)).